Reading from the N-terminus, the 443-residue chain is Frizzled/smoothened-like sans CRD protein E (443 aa).

The N-terminal stretch at 1 to 23 (MISHIKKFINLYTIVFLLYILYS) is a signal peptide. The Extracellular segment spans residues 24–83 (NENFFVKGQKLPPGFCPSPLIYRNTTDRQSDIDIGFQFLGETNCVQPCPSLILTENEWNK). Residue asparagine 47 is glycosylated (N-linked (GlcNAc...) asparagine). The helical transmembrane segment at 84-104 (VFNMSLVAGTISMFALIFLII) threads the bilayer. Residues 105–120 (TYSPLVNNIKDYTRHT) lie on the Cytoplasmic side of the membrane. Residues 121-141 (VGILFLFSGILIAMTTDGRQL) form a helical membrane-spanning segment. Residues 142 to 166 (WDIDLGFKKYCPEPGRFARQSDSKC) lie on the Extracellular side of the membrane. Residues 167-187 (LVTAIFFQFGCVTALLWWAAI) traverse the membrane as a helical segment. Topologically, residues 188–203 (SVDLWITIKKIKISKK) are cytoplasmic. Residues 204-224 (LFIIYTIAVNIVTIVLTFGPV) traverse the membrane as a helical segment. At 225 to 248 (GSKQYGYIDAAIGCWLMDLKYQVG) the chain is on the extracellular side. A helical membrane pass occupies residues 249–269 (YFWAPVGFCLCVGCVSIVLIL). Residues 270–289 (KEIYNVSDAVKKKLLAKHLK) lie on the Cytoplasmic side of the membrane. A helical membrane pass occupies residues 290 to 310 (PLMLIILMLTEFIYMFIFYSY). Topologically, residues 311–350 (TTSKKNHYHDIIEEYVVCLFVHAANPSVCKIGSTISPSAH) are extracellular. The helical transmembrane segment at 351-371 (FFFHLCIRLMGLEVLIFYGFT) threads the bilayer. Residues 372–443 (RQTRKIWMRS…SGIDDSKHDP (72 aa)) are Cytoplasmic-facing. Low complexity-rich tracts occupy residues 397–410 (SSSN…NKTS) and 419–432 (ESSE…QSIE). The interval 397–443 (SSSNDSKSSNNKTSGRVTGGFGESSEQSNEPEQSIELSGIDDSKHDP) is disordered.

The protein belongs to the G-protein coupled receptor Fz/Smo family.

The protein resides in the membrane. This is Frizzled/smoothened-like sans CRD protein E (fscE) from Dictyostelium discoideum (Social amoeba).